A 357-amino-acid polypeptide reads, in one-letter code: Phosphoribosylformylglycinamidine cyclo-ligase (357 aa).

Belongs to the AIR synthase family.

Its subcellular location is the cytoplasm. The enzyme catalyses 2-formamido-N(1)-(5-O-phospho-beta-D-ribosyl)acetamidine + ATP = 5-amino-1-(5-phospho-beta-D-ribosyl)imidazole + ADP + phosphate + H(+). It participates in purine metabolism; IMP biosynthesis via de novo pathway; 5-amino-1-(5-phospho-D-ribosyl)imidazole from N(2)-formyl-N(1)-(5-phospho-D-ribosyl)glycinamide: step 2/2. This Allorhizobium ampelinum (strain ATCC BAA-846 / DSM 112012 / S4) (Agrobacterium vitis (strain S4)) protein is Phosphoribosylformylglycinamidine cyclo-ligase.